Consider the following 141-residue polypeptide: Galactose-6-phosphate isomerase subunit LacA 1 (141 aa).

The protein belongs to the LacAB/RpiB family. Heteromultimeric protein consisting of LacA and LacB.

The catalysed reaction is aldehydo-D-galactose 6-phosphate = keto-D-tagatose 6-phosphate. It participates in carbohydrate metabolism; D-galactose 6-phosphate degradation; D-tagatose 6-phosphate from D-galactose 6-phosphate: step 1/1. This Streptococcus pyogenes serotype M6 (strain ATCC BAA-946 / MGAS10394) protein is Galactose-6-phosphate isomerase subunit LacA 1.